The sequence spans 1441 residues: Remodeling and spacing factor 1 (1441 aa).

A DDT domain is found at 17-84; that stretch reads PGSCPNFAVV…MRKIGKSVTA (68 aa). Glycyl lysine isopeptide (Lys-Gly) (interchain with G-Cter in SUMO2) cross-links involve residues K136 and K215. Polar residues predominate over residues 215–227; it reads KNSSQQDNSSRES. The disordered stretch occupies residues 215-283; sequence KNSSQQDNSS…TTVKKEKEDE (69 aa). S227 bears the Phosphoserine mark. 2 stretches are compositionally biased toward basic and acidic residues: residues 234–257 and 274–283; these read ETKKEEETPKQEEQKESEKMKSEE and TTVKKEKEDE. Glycyl lysine isopeptide (Lys-Gly) (interchain with G-Cter in SUMO2) cross-links involve residues K236, K243, K248, K252, and K254. K277 participates in a covalent cross-link: Glycyl lysine isopeptide (Lys-Gly) (interchain with G-Cter in SUMO1); alternate. A Glycyl lysine isopeptide (Lys-Gly) (interchain with G-Cter in SUMO2); alternate cross-link involves residue K277. Glycyl lysine isopeptide (Lys-Gly) (interchain with G-Cter in SUMO2) cross-links involve residues K284, K288, K294, K305, K306, K309, K323, K327, K337, K342, K358, K373, K381, and K390. The segment covering 330–340 has biased composition (basic and acidic residues); it reads RADPKDTKSSM. The segment at 330–385 is disordered; sequence RADPKDTKSSMEKPVAQEPERIEFGGNIKSSHEITEKSTEETEKLKNDQQAKIPLK. Residues 359–378 show a composition bias toward basic and acidic residues; the sequence is SSHEITEKSTEETEKLKNDQ. Residues S392 and S397 each carry the phosphoserine modification. Glycyl lysine isopeptide (Lys-Gly) (interchain with G-Cter in SUMO2) cross-links involve residues K400, K405, K415, and K419. Position 429 is a phosphoserine (S429). K439 is covalently cross-linked (Glycyl lysine isopeptide (Lys-Gly) (interchain with G-Cter in SUMO2)). A Glycyl lysine isopeptide (Lys-Gly) (interchain with G-Cter in SUMO1); alternate cross-link involves residue K456. Residue K456 forms a Glycyl lysine isopeptide (Lys-Gly) (interchain with G-Cter in SUMO2); alternate linkage. Residues K463 and K468 each participate in a glycyl lysine isopeptide (Lys-Gly) (interchain with G-Cter in SUMO2) cross-link. Over residues 467-480 the composition is skewed to basic and acidic residues; that stretch reads TKEESYSPSKDRNI. A disordered region spans residues 467 to 634; that stretch reads TKEESYSPSK…AAETSPPSNI (168 aa). A Phosphoserine modification is found at S473. Residues 482-498 are compositionally biased toward polar residues; the sequence is TEGNGTESLNSVITSMK. K498 is covalently cross-linked (Glycyl lysine isopeptide (Lys-Gly) (interchain with G-Cter in SUMO2)). The segment covering 500–514 has biased composition (basic and acidic residues); the sequence is GELEKETAPLRKDAD. The residue at position 524 (S524) is a Phosphoserine. Residues 552–562 show a composition bias toward polar residues; that stretch reads SKTALSSTESC. K565 participates in a covalent cross-link: Glycyl lysine isopeptide (Lys-Gly) (interchain with G-Cter in SUMO2). The span at 565 to 601 shows a compositional bias: basic and acidic residues; the sequence is KGEEKSPKTKKDKRPPILECLEKLEKSKKTFLDKDAQ. Residues S570 and S604 each carry the phosphoserine modification. A compositionally biased stretch (basic and acidic residues) spans 609-621; the sequence is EVPKSTLESEKPG. Position 622 is a phosphoserine (S622). T628 bears the Phosphothreonine mark. S629 carries the post-translational modification Phosphoserine. Residues K662, K663, K670, K677, K698, and K709 each participate in a glycyl lysine isopeptide (Lys-Gly) (interchain with G-Cter in SUMO2) cross-link. The disordered stretch occupies residues 675–887; it reads FTKVEMDNLD…EEKESEEAIL (213 aa). A Phosphoserine modification is found at S748. 3 stretches are compositionally biased toward basic and acidic residues: residues 753–770, 789–802, and 816–831; these read LEPENKQEKTEKEEEKTN, AEIRDQKADKKRGE, and KTDKKEILKKSEKDTN. Glycyl lysine isopeptide (Lys-Gly) (interchain with G-Cter in SUMO2) cross-links involve residues K758, K768, K795, and K799. A compositionally biased stretch (low complexity) spans 864 to 873; it reads GSGSEKSSAA. Positions 874–887 are enriched in acidic residues; sequence SEEEEEKESEEAIL. Phosphoserine is present on S882. Residues 891 to 941 form a PHD-type zinc finger; it reads DEPCKKCGLPNHPELILLCDSCDSGYHTACLRPPLMIIPDGEWFCPPCQHK. Positions 942 to 1012 form a coiled coil; it reads LLCEKLEEQL…SKANLLERRS (71 aa). Positions 983–1007 are disordered; sequence PPQEPDFSEDQEEKKKDSKKSKANL. Residue K1039 forms a Glycyl lysine isopeptide (Lys-Gly) (interchain with G-Cter in SUMO2) linkage. K1050 is subject to N6-acetyllysine. Positions 1063–1428 are disordered; it reads ISTILDEERK…EEEEDELLRV (366 aa). Acidic residues-rich tracts occupy residues 1094-1107 and 1120-1141; these read LDSDSNLDEEESED and VVSDENPDESEEDPPSNDDSDT. Phosphoserine occurs at positions 1096, 1098, and 1105. The segment covering 1146-1169 has biased composition (basic residues); the sequence is RRLRRHPSRPMRQSRRLRRKTPKK. Over residues 1189–1199 the composition is skewed to acidic residues; that stretch reads SDFSDDFSDDF. A compositionally biased stretch (basic residues) spans 1203–1212; that stretch reads RRRRSRRNQK. Phosphoserine is present on residues S1221, S1223, and S1226. Over residues 1229–1244 the composition is skewed to basic residues; that stretch reads SLRRGKEIRRVHKRRL. Residues S1258 and S1277 each carry the phosphoserine modification. The residue at position 1278 (T1278) is a Phosphothreonine. Residues 1280–1292 show a composition bias toward acidic residues; that stretch reads EYSEADEEEEEEE. Residue T1305 is modified to Phosphothreonine. 2 positions are modified to phosphoserine: S1325 and S1336. A compositionally biased stretch (basic and acidic residues) spans 1335 to 1344; sequence ESTKKPYRIE. The residue at position 1339 (K1339) is an N6-acetyllysine. A phosphoserine mark is found at S1345, S1359, and S1375. Positions 1394–1408 are enriched in polar residues; the sequence is PKDNSTASASLASNG.

Component of the RSF-1 ISWI chromatin-remodeling complex at least composed of SMARCA1 and RSF1. Within the RSF-1 ISWI chromatin-remodeling complex interacts with SMARCA1. Component of the RSF-5 ISWI chromatin-remodeling complex (also called the RSF complex) at least composed of SMARCA5/SNF2H and RSF1. Within the RSF-5 ISWI chromatin-remodeling complex interacts with SMARCA5/SNF2H; the interaction is direct. Identified in a centromere complex containing histones H2A, H2B and H4, and at least CENPA, CENPB, CENPC, CENPT, CENPN, HJURP, SUPT16H, SSRP1 and RSF1. Also binds the HBV pX/HBx protein, which is required to activate transcription of the viral genome. Post-translationally, phosphorylated. Ubiquitously expressed. Highly expressed in the heart, skeletal muscle, kidney and placenta. Expressed at low levels in the brain and colon.

It is found in the nucleus. Regulatory subunit of the ATP-dependent RSF-1 and RSF-5 ISWI chromatin-remodeling complexes, which form ordered nucleosome arrays on chromatin and facilitate access to DNA during DNA-templated processes such as DNA replication, transcription, and repair. Binds to core histones together with SMARCA5, and is required for the assembly of regular nucleosome arrays by the RSF-5 ISWI chromatin-remodeling complex. Directly stimulates the ATPase activity of SMARCA1 and SMARCA5 in the RSF-1 and RSF-5 ISWI chromatin-remodeling complexes, respectively. The RSF-1 ISWI chromatin remodeling complex has a lower ATP hydrolysis rate than the RSF-5 ISWI chromatin-remodeling complex. The complexes do not have the ability to slide mononucleosomes to the center of a DNA template. Facilitates transcription of hepatitis B virus (HBV) genes by the pX transcription activator. In case of infection by HBV, together with pX, it represses TNF-alpha induced NF-kappa-B transcription activation. Represses transcription when artificially recruited to chromatin by fusion to a heterogeneous DNA binding domain. This Homo sapiens (Human) protein is Remodeling and spacing factor 1 (RSF1).